The following is a 140-amino-acid chain: ATP synthase epsilon chain (140 aa).

Belongs to the ATPase epsilon chain family. In terms of assembly, F-type ATPases have 2 components, CF(1) - the catalytic core - and CF(0) - the membrane proton channel. CF(1) has five subunits: alpha(3), beta(3), gamma(1), delta(1), epsilon(1). CF(0) has three main subunits: a, b and c.

The protein resides in the cell membrane. Its function is as follows. Produces ATP from ADP in the presence of a proton gradient across the membrane. The polypeptide is ATP synthase epsilon chain (Dehalococcoides mccartyi (strain ATCC BAA-2100 / JCM 16839 / KCTC 5957 / BAV1)).